The following is a 521-amino-acid chain: MNAYAYTACLGIYGSTPNNEQLVLGSPDQLQRNKPRFRLIVLPHAPAASPFYPPWRSFAPDWEGQGARPMDHFKVGNLRFQLETHRIDEHSTFGKLFGHAPSPSQSCVSFQKKSDRAEPLLLARCSAASWSCIHPPTVLYFVAYQLEYPFAARFSATKISPIQDKMVATSDVPIVGSLYVYAPNKGAPIFFTIAFAISTILHSWQCHRYKAWKLIWLQPACAALFTLGYALREYGAYNYLYDGTEKAPLALFILSQICIYLGPPLLELANYHILGRVFHYVPYAAPFNPGRVTAFFGGLMAIVEGLSGSGVSLTANAKAKESTKKTGHNLLLVALALQVCVIFIFVYLSVLFHRRCIKAKVPAQSKAVKSTLMTLYLSMALIFIRCVFRLVEMATSSTSVDITSMERLMKLSPVLRNEAYFYAFEASLMLINSFLWNVQHPGPHLPGDTHIYLAQDGTEVEGEGDGSEDRPLLLNMANTLMFGLLYRDDKDHTHSQPQELYENPNGNGHKKFRLGNGGRAT.

A run of 7 helical transmembrane segments spans residues 186–206 (GAPI…SWQC), 211–231 (AWKL…GYAL), 249–269 (LALF…LELA), 292–312 (VTAF…SGVS), 332–352 (LVAL…SVLF), 371–391 (TLMT…FRLV), and 418–438 (EAYF…LWNV). Positions 493–521 (THSQPQELYENPNGNGHKKFRLGNGGRAT) are disordered.

It belongs to the lipid-translocating exporter (LTE) (TC 9.A.26.1) family.

It is found in the membrane. Lipid-translocating exporter-like protein; part of the gene cluster that mediates the biosynthesis of phomenoic acid, a long chain aliphatic carboxylic acid that does not appear to be essential for pathogenicity but may play a role in allowing to outcompete other fungi in the environmental niche via its antifungal properties. The protein is Lipid-translocating exporter-like protein RTA1 of Leptosphaeria maculans (strain JN3 / isolate v23.1.3 / race Av1-4-5-6-7-8) (Blackleg fungus).